A 614-amino-acid chain; its full sequence is DNA mismatch repair protein MutL (614 aa).

Belongs to the DNA mismatch repair MutL/HexB family.

This protein is involved in the repair of mismatches in DNA. It is required for dam-dependent methyl-directed DNA mismatch repair. May act as a 'molecular matchmaker', a protein that promotes the formation of a stable complex between two or more DNA-binding proteins in an ATP-dependent manner without itself being part of a final effector complex. In Thermoanaerobacter sp. (strain X514), this protein is DNA mismatch repair protein MutL.